The chain runs to 166 residues: NAD(P)H-quinone oxidoreductase subunit I, chloroplastic (166 aa).

2 4Fe-4S ferredoxin-type domains span residues 55 to 84 and 95 to 124; these read GRIH…VDWK and LNYS…MTEE. C64, C67, C70, C74, C104, C107, C110, and C114 together coordinate [4Fe-4S] cluster.

It belongs to the complex I 23 kDa subunit family. As to quaternary structure, NDH is composed of at least 16 different subunits, 5 of which are encoded in the nucleus. The cofactor is [4Fe-4S] cluster.

Its subcellular location is the plastid. It is found in the chloroplast thylakoid membrane. It catalyses the reaction a plastoquinone + NADH + (n+1) H(+)(in) = a plastoquinol + NAD(+) + n H(+)(out). The enzyme catalyses a plastoquinone + NADPH + (n+1) H(+)(in) = a plastoquinol + NADP(+) + n H(+)(out). NDH shuttles electrons from NAD(P)H:plastoquinone, via FMN and iron-sulfur (Fe-S) centers, to quinones in the photosynthetic chain and possibly in a chloroplast respiratory chain. The immediate electron acceptor for the enzyme in this species is believed to be plastoquinone. Couples the redox reaction to proton translocation, and thus conserves the redox energy in a proton gradient. This chain is NAD(P)H-quinone oxidoreductase subunit I, chloroplastic, found in Raillardella argentea (Silky raillardella).